The chain runs to 203 residues: Membrane-spanning 4-domains subfamily A member 13 (203 aa).

4 consecutive transmembrane segments (helical) span residues 15 to 35 (VLGV…YFLL), 56 to 76 (MGTS…VKAA), 84 to 104 (ILCT…AASL), and 141 to 161 (FAIA…SSIV).

This sequence belongs to the MS4A family.

Its subcellular location is the membrane. In terms of biological role, may be involved in signal transduction as a component of a multimeric receptor complex. In Mus musculus (Mouse), this protein is Membrane-spanning 4-domains subfamily A member 13 (Ms4a13).